The primary structure comprises 286 residues: MKKIGVITNREKDKGLKYTNQLVESIEKHGGQAVLPTYDGSFQMDDIDNQVVEICNNCDMVICLGGDGTFLRTARTAYLYGLPMLGINLGSLGFLTDVEKGEIDKAVENILNNRFCLEDRIMLTSKLYKDGKLIARDVAINDIVISRGGIPRILHLSTYIDNNLVEMFPGDGIVVATPTGSTAYSLSAGGPIVEPTSGLILITPICPHILSSRALITSDMRKIKICVSQGFEHKATVTVDGQKNLEITGGDYLEIEKANSTVKIIRVNSKNFFTVLRSKIYERKEE.

The Proton acceptor role is filled by Asp-67. Residues 67 to 68 (DG), Arg-72, 141 to 142 (ND), Arg-152, Asp-171, 182 to 187 (TAYSLS), and Gln-242 contribute to the NAD(+) site.

Belongs to the NAD kinase family. A divalent metal cation is required as a cofactor.

Its subcellular location is the cytoplasm. The enzyme catalyses NAD(+) + ATP = ADP + NADP(+) + H(+). Its function is as follows. Involved in the regulation of the intracellular balance of NAD and NADP, and is a key enzyme in the biosynthesis of NADP. Catalyzes specifically the phosphorylation on 2'-hydroxyl of the adenosine moiety of NAD to yield NADP. This is NAD kinase from Ruminiclostridium cellulolyticum (strain ATCC 35319 / DSM 5812 / JCM 6584 / H10) (Clostridium cellulolyticum).